A 728-amino-acid polypeptide reads, in one-letter code: 1,4-alpha-glucan branching enzyme GlgB (728 aa).

Catalysis depends on Asp405, which acts as the Nucleophile. The active-site Proton donor is Glu458.

Belongs to the glycosyl hydrolase 13 family. GlgB subfamily. Monomer.

It catalyses the reaction Transfers a segment of a (1-&gt;4)-alpha-D-glucan chain to a primary hydroxy group in a similar glucan chain.. The protein operates within glycan biosynthesis; glycogen biosynthesis. Its function is as follows. Catalyzes the formation of the alpha-1,6-glucosidic linkages in glycogen by scission of a 1,4-alpha-linked oligosaccharide from growing alpha-1,4-glucan chains and the subsequent attachment of the oligosaccharide to the alpha-1,6 position. The protein is 1,4-alpha-glucan branching enzyme GlgB of Escherichia coli O139:H28 (strain E24377A / ETEC).